A 442-amino-acid polypeptide reads, in one-letter code: Trigger factor (442 aa).

A PPIase FKBP-type domain is found at 162–247 (GDTVTIDYKG…IHEVKSKQLP (86 aa)).

The protein belongs to the FKBP-type PPIase family. Tig subfamily.

It is found in the cytoplasm. It carries out the reaction [protein]-peptidylproline (omega=180) = [protein]-peptidylproline (omega=0). In terms of biological role, involved in protein export. Acts as a chaperone by maintaining the newly synthesized protein in an open conformation. Functions as a peptidyl-prolyl cis-trans isomerase. The chain is Trigger factor from Lactobacillus acidophilus (strain ATCC 700396 / NCK56 / N2 / NCFM).